Consider the following 154-residue polypeptide: Dau c 1 isoallergen Dau c 1.0301 (154 aa).

This sequence belongs to the BetVI family. In terms of tissue distribution, expressed in roots.

This chain is Dau c 1 isoallergen Dau c 1.0301, found in Daucus carota (Wild carrot).